Here is an 851-residue protein sequence, read N- to C-terminus: MFFTISTHKMSSIADRNDGSIFDGLVEEDDKDKAKRVSRNKSEKKRRDQFNVLIKELGSMLPGNARKMDKSTVLQKSIDFLRKHKEITAQSDASEIRQDWKPTFLSNEEFTQLMLEALDGFFLAIMTDGNIIYVSESITPLLEHLPSDLVDQSVFNFIPEGEHSEIYKILSSHLLESDSLTPEYLKSKNQLEFCCHMLRGTIDPKEQPTYEYVKFIGNFKCLNNVPNSAHNGFEGTIQRSHRPSYEDKVCFVATVRLATPQFIKEMCTVEEPNEEFTSRHSLEWKFLFLDHRAPPIIGYLPFEVLGTSGYDYYHVDDLDNLAKCHEHLMQYGKGKSCYYRFLTKGQQWIWLQTHYYITYHQWNSRPEFIVCTHTVVSYAEVRAERRRELGIEESLPEITGDKSQDSGSDNHINTVSLKEALERFDTSPTPSASSRSSRKSSHTAVSDHSSTPTKMTVDTSTPPRQSLSGHEKTAQRRSSLSSQSLSSQSLGQPVAQPTMSQPSTLQLQSGMSQPVFQFSAQLGAMQHLKDQLEQRTRMIEANIHRQQEELRKIQEQLQIVHGQGLQMFLQQSASGLNFGSVQLASGNSSNVQQLTPINMQGQVVQTNQTQSGMSTGHISAPHMIQQQSLQSTATQHNQQNVLSGHTQQSSLASQSQNTVSAPLYNTMVISQPTTGNVVQVPSSLPQNNNQNAAAVTTFTQDRQIRFSQGQQLVTKLVTAPVACGAVMVPSTMFMGQVVTAYPTFAAQQQQPQTLSITQQQQQSQQDQQQQQLTTAQQPAQQQLTQHPQQFLQTSRLLHGNQSAQLILSAAFPLQQSTFTQSHHQQHQSQQQQQLVRHRTDKMTDPSKAQPQ.

The Nuclear localization signal motif lies at 32 to 47 (DKAKRVSRNKSEKKRR). One can recognise a bHLH domain in the interval 34 to 84 (AKRVSRNKSEKKRRDQFNVLIKELGSMLPGNARKMDKSTVLQKSIDFLRKH). Serine 38 and serine 42 each carry phosphoserine. Residue lysine 67 forms a Glycyl lysine isopeptide (Lys-Gly) (interchain with G-Cter in SUMO1) linkage. PAS domains lie at 107 to 177 (NEEF…LLES) and 262 to 332 (FIKE…MQYG). The PAC domain maps to 336–379 (SCYYRFLTKGQQWIWLQTHYYITYHQWNSRPEFIVCTHTVVSYA). Residue serine 408 is modified to Phosphoserine. A disordered region spans residues 420–508 (ALERFDTSPT…MSQPSTLQLQ (89 aa)). Position 427 is a phosphoserine; by GSK3-beta (serine 427). Residues 447–468 (DHSSTPTKMTVDTSTPPRQSLS) are compositionally biased toward polar residues. Residues threonine 451 and threonine 461 each carry the phosphothreonine; by CDK5 modification. The span at 476 to 490 (RRSSLSSQSLSSQSL) shows a compositional bias: low complexity. Residues 495–508 (AQPTMSQPSTLQLQ) are compositionally biased toward polar residues. The tract at residues 516-566 (FQFSAQLGAMQHLKDQLEQRTRMIEANIHRQQEELRKIQEQLQIVHGQGLQ) is implicated in the circadian rhythmicity. Disordered regions lie at residues 627–655 (QSLQSTATQHNQQNVLSGHTQQSSLASQS) and 817–851 (TFTQSHHQQHQSQQQQQLVRHRTDKMTDPSKAQPQ). The span at 817–833 (TFTQSHHQQHQSQQQQQ) shows a compositional bias: low complexity. Lysine 847 participates in a covalent cross-link: Glycyl lysine isopeptide (Lys-Gly) (interchain with G-Cter in SUMO1).

In terms of assembly, component of the circadian clock oscillator which includes the CRY proteins, CLOCK or NPAS2, BMAL1 or BMAL2, CSNK1D and/or CSNK1E, TIMELESS and the PER proteins. Forms a heterodimer with BMAL1. The CLOCK-BMAL1 heterodimer is required for E-box-dependent transactivation, for CLOCK nuclear translocation and degradation, and for phosphorylation of both CLOCK and BMAL1. Interaction with PER and CRY proteins requires translocation to the nucleus. Interaction of the CLOCK-BMAL1 heterodimer with PER or CRY inhibits transcription activation. Ubiquitinated, leading to its proteasomal degradation. In terms of processing, O-glycosylated; contains O-GlcNAc. O-glycosylation by OGT prevents protein degradation by inhibiting ubiquitination. It also stabilizes the CLOCK-BMAL1 heterodimer thereby increasing CLOCK-BMAL1-mediated transcriptional activation of PER1/2/3 and CRY1/2. Post-translationally, phosphorylation is dependent on the CLOCK-BMAL1 heterodimer formation. Phosphorylation enhances the transcriptional activity, alters the subcellular localization and decreases the stability of the heterodimer by promoting its degradation. Sumoylation enhances its transcriptional activity and interaction with ESR1, resulting in up-regulation of ESR1 activity. Estrogen stimulates sumoylation. Desumoylation by SENP1 negatively regulates its transcriptional activity. In terms of processing, undergoes lysosome-mediated degradation in a time-dependent manner in the liver.

It is found in the cytoplasm. The protein localises to the nucleus. Its subcellular location is the cytosol. Its function is as follows. Transcriptional activator which forms a core component of the circadian clock. The circadian clock, an internal time-keeping system, regulates various physiological processes through the generation of approximately 24 hour circadian rhythms in gene expression, which are translated into rhythms in metabolism and behavior. It is derived from the Latin roots 'circa' (about) and 'diem' (day) and acts as an important regulator of a wide array of physiological functions including metabolism, sleep, body temperature, blood pressure, endocrine, immune, cardiovascular, and renal function. Consists of two major components: the central clock, residing in the suprachiasmatic nucleus (SCN) of the brain, and the peripheral clocks that are present in nearly every tissue and organ system. Both the central and peripheral clocks can be reset by environmental cues, also known as Zeitgebers (German for 'timegivers'). The predominant Zeitgeber for the central clock is light, which is sensed by retina and signals directly to the SCN. The central clock entrains the peripheral clocks through neuronal and hormonal signals, body temperature and feeding-related cues, aligning all clocks with the external light/dark cycle. Circadian rhythms allow an organism to achieve temporal homeostasis with its environment at the molecular level by regulating gene expression to create a peak of protein expression once every 24 hours to control when a particular physiological process is most active with respect to the solar day. Transcription and translation of core clock components (CLOCK, NPAS2, BMAL1, BMAL2, PER1, PER2, PER3, CRY1 and CRY2) plays a critical role in rhythm generation, whereas delays imposed by post-translational modifications (PTMs) are important for determining the period (tau) of the rhythms (tau refers to the period of a rhythm and is the length, in time, of one complete cycle). A diurnal rhythm is synchronized with the day/night cycle, while the ultradian and infradian rhythms have a period shorter and longer than 24 hours, respectively. Disruptions in the circadian rhythms contribute to the pathology of cardiovascular diseases, cancer, metabolic syndromes and aging. A transcription/translation feedback loop (TTFL) forms the core of the molecular circadian clock mechanism. Transcription factors, CLOCK or NPAS2 and BMAL1 or BMAL2, form the positive limb of the feedback loop, act in the form of a heterodimer and activate the transcription of core clock genes and clock-controlled genes (involved in key metabolic processes), harboring E-box elements (5'-CACGTG-3') within their promoters. The core clock genes: PER1/2/3 and CRY1/2 which are transcriptional repressors form the negative limb of the feedback loop and interact with the CLOCK|NPAS2-BMAL1|BMAL2 heterodimer inhibiting its activity and thereby negatively regulating their own expression. This heterodimer also activates nuclear receptors NR1D1/2 and RORA/B/G, which form a second feedback loop and which activate and repress BMAL1 transcription, respectively. The preferred binding motif for the CLOCK-BMAL1 heterodimer is 5'-CACGTGA-3', which contains a flanking adenine nucleotide at the 3-prime end of the canonical 6-nucleotide E-box sequence. CLOCK specifically binds to the half-site 5'-CAC-3', while BMAL1 binds to the half-site 5'-GTGA-3'. This chain is Circadian locomoter output cycles protein kaput (CLOCK), found in Tyto alba (Barn owl).